The following is a 1091-amino-acid chain: ATP-citrate synthase (1091 aa).

The ATP-grasp domain maps to 4 to 265 (KAISEQTGKE…LDAKSGASLK (262 aa)). The ATP site is built by lysine 58, arginine 66, glycine 67, proline 109, valine 111, and glutamate 118. The residue at position 131 (tyrosine 131) is a Phosphotyrosine. Aspartate 216 contacts ATP. Residues aspartate 257, serine 260, and alanine 262 each contribute to the Mg(2+) site. Serine 263 carries the post-translational modification Phosphoserine. Positions 309, 346, 348, 364, and 379 each coordinate citrate. Residues 442-457 (SGSTSTPAPSRTASFS) show a composition bias toward low complexity. The segment at 442-471 (SGSTSTPAPSRTASFSESRTDEVAPAKKAK) is disordered. Threonine 447 carries the post-translational modification Phosphothreonine. Position 451 is a phosphoserine (serine 451). At serine 455 the chain carries Phosphoserine; by PKA and PKB/AKT1 or PKB/AKT2 or BCKDK. The residue at position 459 (serine 459) is a Phosphoserine. Lysine 530, lysine 536, and lysine 544 each carry N6-acetyllysine; alternate. Residues lysine 530, lysine 536, and lysine 544 each participate in a glycyl lysine isopeptide (Lys-Gly) (interchain with G-Cter in ubiquitin); alternate cross-link. Phosphothreonine is present on threonine 629. Serine 653 bears the Phosphoserine mark. Tyrosine 672 carries the phosphotyrosine modification. Histidine 750 functions as the Tele-phosphohistidine intermediate in the catalytic mechanism. 769-779 (LKEAGVFVPRS) contributes to the CoA binding site. Phosphoserine is present on serine 829. N6-acetyllysine is present on residues lysine 938, lysine 958, lysine 968, and lysine 1067. Serine 1090 is subject to Phosphoserine.

The protein in the N-terminal section; belongs to the succinate/malate CoA ligase beta subunit family. This sequence in the C-terminal section; belongs to the succinate/malate CoA ligase alpha subunit family. As to quaternary structure, homotetramer. Mg(2+) is required as a cofactor. In terms of processing, phosphorylated by PKA and GSK3 in a sequential manner; phosphorylation results in activation of its activity. Phosphorylation on Thr-447 and Ser-451 depends on the phosphorylation state of Ser-455. Phosphorylation on Ser-455 is decreased by prior phosphorylation on the other 2 residues. Phosphorylated at Ser-455 by BCKDK and dephosphorylated by protein phosphatase PPM1K. Post-translationally, ISGylated. Acetylated at Lys-530, Lys-536 and Lys-544 by KAT2B/PCAF. Acetylation is promoted by glucose and stabilizes the protein, probably by preventing ubiquitination at the same sites. Acetylation promotes de novo lipid synthesis. Deacetylated by SIRT2. In terms of processing, ubiquitinated at Lys-530, Lys-536 and Lys-544 by the BCR(KLHL25) E3 ubiquitin ligase complex and UBR4, leading to its degradation. Ubiquitination is probably inhibited by acetylation at same site. BCR(KLHL25)-mediated degradation of ACLY promotes fatty acid oxidation and is required for differentiation of inducible regulatory T (iTreg) cells.

It is found in the cytoplasm. The protein localises to the cytosol. The enzyme catalyses oxaloacetate + acetyl-CoA + ADP + phosphate = citrate + ATP + CoA. Phosphorylation results in activation of its activity. Glucose 6-phosphate, fructose 6-phosphate, fructose 2,6-bisphosphate, ribulose 5-phosphate, and fructose 1,6-bisphosphate also act as activators. In terms of biological role, catalyzes the cleavage of citrate into oxaloacetate and acetyl-CoA, the latter serving as common substrate in multiple biochemical reactions in protein, carbohydrate and lipid metabolism. This Bos taurus (Bovine) protein is ATP-citrate synthase (ACLY).